The sequence spans 248 residues: Segregation and condensation protein A (248 aa).

This sequence belongs to the ScpA family. In terms of assembly, component of a cohesin-like complex composed of ScpA, ScpB and the Smc homodimer, in which ScpA and ScpB bind to the head domain of Smc. The presence of the three proteins is required for the association of the complex with DNA.

It is found in the cytoplasm. In terms of biological role, participates in chromosomal partition during cell division. May act via the formation of a condensin-like complex containing Smc and ScpB that pull DNA away from mid-cell into both cell halves. This Bacillus cytotoxicus (strain DSM 22905 / CIP 110041 / 391-98 / NVH 391-98) protein is Segregation and condensation protein A.